A 407-amino-acid chain; its full sequence is MATIFFADPELVIGHGRRVLFVNPDDLQLFKEIELPPDLATCGLKVADSKEQHCQHEQQDVAAAGSAKQSSNTASASASKAKAIEVSIQNVSYSPDRQLLAITTTGGQKALLLYRSRMEHARLLSVRPLARASSALRFCSDGSSVLVTDKTGDCYQYDCVEVEAAPRLLLGHLSVVFDILWTDDQQHIITCDRDDKIRVTNYPATFDIHSYCLGHKEFVSGLALLTEQHIVSSSGDKTLRVWNFIEGKELLIHQLPAPAVRLQVQQLEPEKVYQVAVLFYDHVDGVAIYRLERSSGDNWAITATTVVRADAGLWNICNFTLTGNRVYVTGAENECLAIKAYDIGSGETSTSVPDGWVKMVLRGLEAEGVAYLPEDLSVWFKKRFDNVSDYLERKKRRIEEQQQQKCG.

3 WD repeats span residues 83-124 (AIEV…ARLL), 171-210 (GHLS…DIHS), and 214-252 (GHKE…ELLI).

The protein belongs to the WD repeat TRM82 family. Forms a heterodimer with the catalytic subunit Mettl1. Interacts with mei-P26 and weakly interacts with bgcn; required for the function or formation of the mei-P26-bgcn-bam-sxl complex. Interacts with nanos; may be involved in mei-P26-dependent derepression of the BMP signaling pathway. Interacts with Myc; the interaction may be mediated by mei-P26 and may be involved in the regulation of ribosome biogenesis. In testis, it is present at high level in hub cells, a niche for germline stem cells of testis. Ubiquitously expressed in all testicular cells throughout spermatogenesis. Ubiquitously expressed in all germline and somatic cells of the ovary.

The protein resides in the nucleus. It localises to the cytoplasm. Its pathway is tRNA modification; N(7)-methylguanine-tRNA biosynthesis. Its function is as follows. Required for the Mettl1-dependent formation of N(7)-methylguanine at position 46 (m7G46) in tRNA. In the Mettl1-wuho methyltransferase complex, it is required to stabilize and induce conformational changes of the catalytic subunit. Required for binding of nanos mRNA and repression of translation by the mei-P26-bgcn-bam-sxl complex. May cooperate with mei-P26 and nanos to derepress the BMP signaling pathway. May cooperate with mei-P26 to suppress expression of a subset of microRNAs. May cooperate with mei-P26 to regulate bam expression levels in germline cells during gametogenesis. Required to promote mitosis to meiosis transition during gametogenesis. May regulate germline cell division in part by regulating ribosome biogenesis. In Drosophila ananassae (Fruit fly), this protein is tRNA (guanine-N(7)-)-methyltransferase non-catalytic subunit wuho.